The following is a 493-amino-acid chain: Cobyric acid synthase (493 aa).

The 195-residue stretch at 261–455 (HTRIAVVAYP…LHGLFEDAAV (195 aa)) folds into the GATase cobBQ-type domain. Cys-342 serves as the catalytic Nucleophile. The active site involves His-447.

This sequence belongs to the CobB/CobQ family. CobQ subfamily.

The protein operates within cofactor biosynthesis; adenosylcobalamin biosynthesis. Its function is as follows. Catalyzes amidations at positions B, D, E, and G on adenosylcobyrinic A,C-diamide. NH(2) groups are provided by glutamine, and one molecule of ATP is hydrogenolyzed for each amidation. This chain is Cobyric acid synthase, found in Acidovorax sp. (strain JS42).